Here is a 109-residue protein sequence, read N- to C-terminus: MSAQPVDIQIFGRSLRVNCPPDQRDALNQAADDLNQRLQDLKERTRVTNTEQLVFIAALNISYELAQEKAKTRDYAASMEQRIRMLQQTIEQALLEQGRITEKTNQNFE.

Residues 21 to 99 (PDQRDALNQA…IEQALLEQGR (79 aa)) adopt a coiled-coil conformation.

It belongs to the ZapA family. Type 1 subfamily. Homodimer. Interacts with FtsZ.

It is found in the cytoplasm. Its function is as follows. Activator of cell division through the inhibition of FtsZ GTPase activity, therefore promoting FtsZ assembly into bundles of protofilaments necessary for the formation of the division Z ring. It is recruited early at mid-cell but it is not essential for cell division. This chain is Cell division protein ZapA, found in Shigella boydii serotype 18 (strain CDC 3083-94 / BS512).